A 520-amino-acid polypeptide reads, in one-letter code: Cell adhesion molecule CEACAM2 (520 aa).

An N-terminal signal peptide occupies residues 1–34 (MELASAHLHKGQVPWFGLLLTASLLASWSPPTTA). The Ig-like V-type domain occupies 35–141 (QVTVMAFPLH…RVLTGQFHVH (107 aa)). The Extracellular portion of the chain corresponds to 35–422 (QVTVMAFPLH…IFDSTYDISD (388 aa)). N-linked (GlcNAc...) asparagine glycans are attached at residues N87, N104, N148, N152, N175, N199, N206, N210, N226, N258, N290, N294, N304, N317, N333, and N361. 3 Ig-like C2-type domains span residues 145-234 (LKSN…FSLN), 239-319 (PDTP…KNIT), and 327-411 (PSLQ…IKLE). A disulfide bridge links C167 with C217. A disulfide bond links C261 and C301. C346 and C394 are joined by a disulfide. Residues 423–443 (VPIAVIITGAVAGVILIAGLA) traverse the membrane as a helical segment. Topologically, residues 444–520 (YRLCSRKSRW…ETVYSEVKKK (77 aa)) are cytoplasmic. The disordered stretch occupies residues 457-520 (QRDLTEHKPS…ETVYSEVKKK (64 aa)). Residues 466 to 480 (SASNHNLAPSDNSPN) are compositionally biased toward polar residues. The residue at position 487 (Y487) is a Phosphotyrosine. The segment covering 490-513 (LNFNSQQPNRPTSAPSSPRATETV) has biased composition (polar residues). Position 502 is a phosphoserine (S502). A Phosphotyrosine modification is found at Y514.

This sequence belongs to the immunoglobulin superfamily. CEA family. As to quaternary structure, interacts weakly with MHV spike protein in tissue culture. As to expression, isoform 2 is detected in elongating spermatids within the seminiferous epithelium (at protein level). Expressed in kidney, colon, uterus, gut mononuclear cells, crypt epithelia of intestinal tissues, and to a lesser extent, in spleen. Expressed in brain including VMH, globus pallidus, ventral pallidum, striatum, olfactory bulb and hippocampus. Also detected in rectal carcinoma cell line CMT93. Isoform 2 and isoform 3 are expressed in testis. Isoform 2 is detected in seminiferous tubule, not detected in epididymal spermatozoa. Also not observed on spermatogonia, spermatocytes, round spermatids or somatic Sertoli cells. During stages I-VII of spermatogenesis, detected on the elongating spermatids. At spermiation (stage VIII) and subsequent stages IX-XII, levels are drastically reduced or absent in the seminiferous tubules. Sometimes weakly detected in the apical region of stage-VIII seminiferous epithelium. Isoform 2 level is very low in stomach, kidney, intestine, liver and spleen.

The protein resides in the cell membrane. In terms of biological role, controls energy balance and peripheral insulin action. Involved in the regulation of feeding behavior particularly in the ventromedial nucleus of hypothalamus (VMH) regulation of food intake. Has a role in the regulation of metabolic rate and insulin sensitivity or resistance via effects on brown adipogenesis, sympathetic nervous outflow to brown adipose tissue, spontaneous activity and energy expenditure in skeletal muscle. In case of murine coronavirus (MHV) infection, does probably not serve as functional receptor for the virus. Isoform 2 may be an adhesion molecule contributing to cell to cell adhesion between elongating spermatids and Sertoli cells within the seminiferous epithelium. This is Cell adhesion molecule CEACAM2 from Mus musculus (Mouse).